The chain runs to 172 residues: Neudesin (172 aa).

An N-terminal signal peptide occupies residues 1–31; it reads MVGPAPRRRLRPLAALALVLALAPGLPTARA. The Cytochrome b5 heme-binding domain occupies 44–129; it reads VRLFTEEELA…KELEALDEVF (86 aa). K136 is modified (N6-acetyllysine). The disordered stretch occupies residues 151–172; sequence DGSPNLDFKPEDQPHFDIKDEF. The segment covering 158 to 172 has biased composition (basic and acidic residues); it reads FKPEDQPHFDIKDEF.

Belongs to the cytochrome b5 family. MAPR subfamily. Interacts with PINK1 and PARK7. In terms of tissue distribution, ubiquitously expressed with high expression in heart. Over-expressed in various tumors including carcinomas of the uterine cervix, lymphoma, colon, lung, skin and leukemia, as well as carcinoma of the breast.

It localises to the secreted. It is found in the extracellular space. Its subcellular location is the mitochondrion. The protein resides in the endoplasmic reticulum. Functionally, acts as a neurotrophic factor in postnatal mature neurons enhancing neuronal survival. Promotes cell proliferation and neurogenesis in undifferentiated neural progenitor cells at the embryonic stage and inhibits differentiation of astrocytes. Its neurotrophic activity is exerted via MAPK1/ERK2, MAPK3/ERK1 and AKT1/AKT pathways. Neurotrophic activity is enhanced by binding to heme. Also acts as an anorexigenic neurotrophic factor that contributes to energy balance. This is Neudesin from Homo sapiens (Human).